Here is a 200-residue protein sequence, read N- to C-terminus: HTH-type transcriptional regulator BetI (200 aa).

Residues 8–68 enclose the HTH tetR-type domain; it reads SIRKQQLIQA…AAMRHIQYQL (61 aa). The H-T-H motif DNA-binding region spans 31–50; it reads SIALIARKAGVSNGIISHYF.

Its pathway is amine and polyamine biosynthesis; betaine biosynthesis via choline pathway [regulation]. Its function is as follows. Repressor involved in the biosynthesis of the osmoprotectant glycine betaine. It represses transcription of the choline transporter BetT and the genes of BetAB involved in the synthesis of glycine betaine. In Proteus mirabilis (strain HI4320), this protein is HTH-type transcriptional regulator BetI.